Consider the following 427-residue polypeptide: 5-hydroxybenzimidazole synthase BzaB (427 aa).

The protein belongs to the ThiC family. 5-hydroxybenzimidazole synthase subfamily. Requires [4Fe-4S] cluster as cofactor.

The enzyme catalyses 5-amino-1-(5-phospho-beta-D-ribosyl)imidazole + AH2 + S-adenosyl-L-methionine = 5-hydroxybenzimidazole + 5'-deoxyadenosine + formate + L-methionine + A + NH4(+) + phosphate + 2 H(+). It functions in the pathway cofactor biosynthesis; adenosylcobalamin biosynthesis. Functionally, together with BzaA, catalyzes the conversion of aminoimidazole ribotide (AIR) to 5-hydroxybenzimidazole (5-HBI) in a radical S-adenosyl-L-methionine (SAM)-dependent reaction. Is thus involved in the anaerobic biosynthesis of dimethylbenzimidazole (DMB), the lower axial ligand of vitamin B12 (cobalamin). Requires BzaA for catalytic activity, as BzaB alone displays no activity. The sequence is that of 5-hydroxybenzimidazole synthase BzaB from Eubacterium limosum.